The primary structure comprises 204 residues: MKAEFKRKGGGKVKLVVGMTGATGAIFGVRLLQWLKAAGVETHLVVSPWANVTIKHETGYTLQEVEQLATYTYSHKDQAAAISSGSFDTDGMIVAPCSMKSLASIRTGMADNLLTRAADVMLKERKKLVLLTRETPLNQIHLENMLALTKMGTIILPPMPAFYNRPRSLEEMVDHIVFRTLDQFGIRLPEAKRWNGIEKQKGGA.

Residues 21–23 (GAT), Ser-47, 98–101 (SMKS), and Arg-133 contribute to the FMN site.

This sequence belongs to the UbiX/PAD1 family. YclB subfamily. As to quaternary structure, homododecamer.

The enzyme catalyses dimethylallyl phosphate + FMNH2 = prenylated FMNH2 + phosphate. In terms of biological role, involved in the non-oxidative decarboxylation and detoxification of phenolic derivatives under both aerobic and anaerobic conditions. Flavin prenyltransferase that catalyzes the synthesis of the prenylated FMN cofactor (prenyl-FMN) for phenolic acid decarboxylase. The sequence is that of Probable UbiX-like flavin prenyltransferase from Bacillus subtilis (strain 168).